A 327-amino-acid chain; its full sequence is MSSQFEQLKLLSVLVCDTGDPELVKSSGSQDATTNPSLILKVAQEPKYQEMLTEAIAWGIRQNGDDVQTLTFVLDKIQVNFGLEILKCIPGRVSLEIDARLSFNTEAMVQRAIFLSELFVASGGDKKRLLVKIPGTWEGIQAVEILEKQGISCNVTLIFNLIQAIAAAKAKATLISPFVGRIYDWWIAAYGDEGYSIDTDPGVASVSNIYTYYKKFDIPTQIMAASFRSKEQVLALAGCDLLTVSPKLLDELKKDQSSVTKKLDVAEAKKLDVQPVELTESVFRFLMNEDAMATEKLAEGIRIFSGDTQILEAAVTEFIKQIAAQDA.

Catalysis depends on Lys-132, which acts as the Schiff-base intermediate with substrate.

This sequence belongs to the transaldolase family. Type 1 subfamily. As to quaternary structure, homodimer.

The protein resides in the cytoplasm. The enzyme catalyses D-sedoheptulose 7-phosphate + D-glyceraldehyde 3-phosphate = D-erythrose 4-phosphate + beta-D-fructose 6-phosphate. It participates in carbohydrate degradation; pentose phosphate pathway; D-glyceraldehyde 3-phosphate and beta-D-fructose 6-phosphate from D-ribose 5-phosphate and D-xylulose 5-phosphate (non-oxidative stage): step 2/3. Its function is as follows. Transaldolase is important for the balance of metabolites in the pentose-phosphate pathway. The chain is Transaldolase from Chlamydia felis (strain Fe/C-56) (Chlamydophila felis).